A 354-amino-acid polypeptide reads, in one-letter code: MGSNQDDQAFLFAMQLASASVLPMVLKTAIELDLLETIAKAGPHGSVSSSELVAQLPKVNNPEAPVMIDRICSLLASYSVLTCTLKETADGCAERFYGLAPVCKFLIKNDAGVSLAPLLLMNQDKVLMESWYYLKDPVLDGGIPFNKAYGMSAFEYHGKDQRFNKVFNSGMFNHSTMTMKKIVELYNGFSGLKTLVDVGGGTGASLNMITSKHKSLKGINFDLPHVIADATTYQGIEHVGGDMFESVPKGDAIFMKWILHDWSDAHCLQVLKNCYKSLPENGKVIVAECILPEAPDTTPATQNVIHIDVIMLAHNPGGKERTEKEFEALAKGAGFKGFNKAACALNTWVMEFCK.

A substrate-binding site is contributed by 121–127; it reads MNQDKVL. The substrate binding stretch occupies residues 153–171; the sequence is AFEYHGKDQRFNKVFNSGM. Gly199, Asp222, Asp242, Met243, and Lys256 together coordinate S-adenosyl-L-methionine. His260 acts as the Proton acceptor in catalysis.

The protein belongs to the class I-like SAM-binding methyltransferase superfamily. Cation-independent O-methyltransferase family. COMT subfamily. As to quaternary structure, homodimer.

It carries out the reaction (E)-caffeate + S-adenosyl-L-methionine = (E)-ferulate + S-adenosyl-L-homocysteine + H(+). The protein operates within aromatic compound metabolism; phenylpropanoid biosynthesis. Its function is as follows. Catalyzes the conversion of caffeic acid to ferulic acid and of 5-hydroxyferulic acid to sinapic acid. The resulting products may subsequently be converted to the corresponding alcohols that are incorporated into lignins. The chain is Caffeic acid 3-O-methyltransferase from Zinnia elegans (Garden zinnia).